A 128-amino-acid chain; its full sequence is Small ribosomal subunit protein eS8 (128 aa).

Residues 1–31 form a disordered region; the sequence is MAWYQGNDLRKPTGGKKTRHRKKRKHELGRP. The span at 13 to 27 shows a compositional bias: basic residues; that stretch reads TGGKKTRHRKKRKHE.

It belongs to the eukaryotic ribosomal protein eS8 family. In terms of assembly, part of the 30S ribosomal subunit.

The sequence is that of Small ribosomal subunit protein eS8 from Staphylothermus marinus (strain ATCC 43588 / DSM 3639 / JCM 9404 / F1).